The following is a 196-amino-acid chain: Imidazole glycerol phosphate synthase subunit HisH (196 aa).

One can recognise a Glutamine amidotransferase type-1 domain in the interval 2 to 196; sequence NVVILDTGCA…AQLLKNFLEM (195 aa). Residue Cys-77 is the Nucleophile of the active site. Residues His-178 and Glu-180 contribute to the active site.

As to quaternary structure, heterodimer of HisH and HisF.

Its subcellular location is the cytoplasm. The enzyme catalyses 5-[(5-phospho-1-deoxy-D-ribulos-1-ylimino)methylamino]-1-(5-phospho-beta-D-ribosyl)imidazole-4-carboxamide + L-glutamine = D-erythro-1-(imidazol-4-yl)glycerol 3-phosphate + 5-amino-1-(5-phospho-beta-D-ribosyl)imidazole-4-carboxamide + L-glutamate + H(+). It carries out the reaction L-glutamine + H2O = L-glutamate + NH4(+). Its pathway is amino-acid biosynthesis; L-histidine biosynthesis; L-histidine from 5-phospho-alpha-D-ribose 1-diphosphate: step 5/9. In terms of biological role, IGPS catalyzes the conversion of PRFAR and glutamine to IGP, AICAR and glutamate. The HisH subunit catalyzes the hydrolysis of glutamine to glutamate and ammonia as part of the synthesis of IGP and AICAR. The resulting ammonia molecule is channeled to the active site of HisF. This Salmonella choleraesuis (strain SC-B67) protein is Imidazole glycerol phosphate synthase subunit HisH.